Reading from the N-terminus, the 85-residue chain is MGLKLHINWFDKRTEEFKGGEYSKDFGDDGSVIERLGMPFKDNINNGWFDVIAEWVPLLQPYFNHQIDISDNEYFVSFDYRDGDW.

This sequence belongs to the cloacin immunity protein family.

In terms of biological role, this protein inhibits the 16S RNA hydrolyzing activity of colicin E6 by binding with high affinity to the C-terminal catalytic domain of E6. This protein is able to protect a cell, which harbors the plasmid ColE6 against colicin E6. In Escherichia coli, this protein is Colicin-E6 immunity protein (imm).